A 62-amino-acid chain; its full sequence is Toxin Tst2 (62 aa).

The LCN-type CS-alpha/beta domain maps to 1–62 (KEGYAMDHEG…KVWDYATNKC (62 aa)). Intrachain disulfides connect cysteine 11–cysteine 62, cysteine 15–cysteine 38, cysteine 23–cysteine 43, and cysteine 27–cysteine 45. Cysteine amide is present on cysteine 62.

Expressed by the venom gland.

Its subcellular location is the secreted. Functionally, alpha toxins bind voltage-independently at site-3 of sodium channels (Nav) and inhibit the inactivation of the activated channels, thereby blocking neuronal transmission. Is toxic to mice. The polypeptide is Toxin Tst2 (Tityus stigmurus (Brazilian scorpion)).